Consider the following 162-residue polypeptide: NADH-quinone oxidoreductase subunit I 2 (162 aa).

4Fe-4S ferredoxin-type domains lie at Leu-52 to Gly-82 and Glu-93 to Asn-122. [4Fe-4S] cluster-binding residues include Cys-62, Cys-65, Cys-68, Cys-72, Cys-102, Cys-105, Cys-108, and Cys-112.

This sequence belongs to the complex I 23 kDa subunit family. NDH-1 is composed of 14 different subunits. Subunits NuoA, H, J, K, L, M, N constitute the membrane sector of the complex. The cofactor is [4Fe-4S] cluster.

Its subcellular location is the cell inner membrane. The enzyme catalyses a quinone + NADH + 5 H(+)(in) = a quinol + NAD(+) + 4 H(+)(out). Functionally, NDH-1 shuttles electrons from NADH, via FMN and iron-sulfur (Fe-S) centers, to quinones in the respiratory chain. The immediate electron acceptor for the enzyme in this species is believed to be ubiquinone. Couples the redox reaction to proton translocation (for every two electrons transferred, four hydrogen ions are translocated across the cytoplasmic membrane), and thus conserves the redox energy in a proton gradient. This chain is NADH-quinone oxidoreductase subunit I 2, found in Rhodopseudomonas palustris (strain BisA53).